Consider the following 115-residue polypeptide: T cell receptor beta variable 7-8 (115 aa).

Residues 1-21 form the signal peptide; that stretch reads MGTRLLCWVVLGFLGTDHTGA. An Ig-like domain is found at 22–115; that stretch reads GVSQSPRYKV…SAVYLCASSL (94 aa). An intrachain disulfide couples cysteine 42 to cysteine 111.

As to quaternary structure, alpha-beta TR is a heterodimer composed of an alpha and beta chain; disulfide-linked. The alpha-beta TR is associated with the transmembrane signaling CD3 coreceptor proteins to form the TR-CD3 (TcR or TCR). The assembly of alpha-beta TR heterodimers with CD3 occurs in the endoplasmic reticulum where a single alpha-beta TR heterodimer associates with one CD3D-CD3E heterodimer, one CD3G-CD3E heterodimer and one CD247 homodimer forming a stable octameric structure. CD3D-CD3E and CD3G-CD3E heterodimers preferentially associate with TR alpha and TR beta chains, respectively. The association of the CD247 homodimer is the last step of TcR assembly in the endoplasmic reticulum and is required for transport to the cell surface.

It localises to the cell membrane. Its function is as follows. V region of the variable domain of T cell receptor (TR) beta chain that participates in the antigen recognition. Alpha-beta T cell receptors are antigen specific receptors which are essential to the immune response and are present on the cell surface of T lymphocytes. Recognize peptide-major histocompatibility (MH) (pMH) complexes that are displayed by antigen presenting cells (APC), a prerequisite for efficient T cell adaptive immunity against pathogens. Binding of alpha-beta TR to pMH complex initiates TR-CD3 clustering on the cell surface and intracellular activation of LCK that phosphorylates the ITAM motifs of CD3G, CD3D, CD3E and CD247 enabling the recruitment of ZAP70. In turn ZAP70 phosphorylates LAT, which recruits numerous signaling molecules to form the LAT signalosome. The LAT signalosome propagates signal branching to three major signaling pathways, the calcium, the mitogen-activated protein kinase (MAPK) kinase and the nuclear factor NF-kappa-B (NF-kB) pathways, leading to the mobilization of transcription factors that are critical for gene expression and essential for T cell growth and differentiation. The T cell repertoire is generated in the thymus, by V-(D)-J rearrangement. This repertoire is then shaped by intrathymic selection events to generate a peripheral T cell pool of self-MH restricted, non-autoaggressive T cells. Post-thymic interaction of alpha-beta TR with the pMH complexes shapes TR structural and functional avidity. The sequence is that of T cell receptor beta variable 7-8 from Homo sapiens (Human).